We begin with the raw amino-acid sequence, 51 residues long: Large ribosomal subunit protein eL39 (51 aa).

This sequence belongs to the eukaryotic ribosomal protein eL39 family.

This is Large ribosomal subunit protein eL39 from Staphylothermus marinus (strain ATCC 43588 / DSM 3639 / JCM 9404 / F1).